We begin with the raw amino-acid sequence, 186 residues long: Alkyl hydroperoxide reductase AhpD (186 aa).

C132 serves as the catalytic Proton donor. Residues C132 and C135 are joined by a disulfide bond. Residue C135 is the Cysteine sulfenic acid (-SOH) intermediate of the active site.

Belongs to the AhpD family.

The catalysed reaction is N(6)-[(R)-dihydrolipoyl]-L-lysyl-[lipoyl-carrier protein] + a hydroperoxide = N(6)-[(R)-lipoyl]-L-lysyl-[lipoyl-carrier protein] + an alcohol + H2O. Antioxidant protein with alkyl hydroperoxidase activity. Required for the reduction of the AhpC active site cysteine residues and for the regeneration of the AhpC enzyme activity. The sequence is that of Alkyl hydroperoxide reductase AhpD from Anaeromyxobacter dehalogenans (strain 2CP-C).